We begin with the raw amino-acid sequence, 146 residues long: MSHKILLVNGPNLNLLGRREPSVYGHQTLADIVAELKQQAKLAEVELEHIQSNAEFELINAIHATDAQMIIINPAAFTHTSVALRDALLGVAIPFFEVHLSNVHAREAFRHHSYFSDKAIGVICGFGSQGYEFALAAAIKRLNQPQ.

The active-site Proton acceptor is the tyrosine 24. Substrate is bound by residues asparagine 73, histidine 79, and aspartate 86. Residue histidine 99 is the Proton donor of the active site. Residues 100–101 (LS) and arginine 110 each bind substrate.

Belongs to the type-II 3-dehydroquinase family. In terms of assembly, homododecamer.

It carries out the reaction 3-dehydroquinate = 3-dehydroshikimate + H2O. The protein operates within metabolic intermediate biosynthesis; chorismate biosynthesis; chorismate from D-erythrose 4-phosphate and phosphoenolpyruvate: step 3/7. Catalyzes a trans-dehydration via an enolate intermediate. The chain is 3-dehydroquinate dehydratase from Shewanella baltica (strain OS185).